Here is a 430-residue protein sequence, read N- to C-terminus: Vitamin B6 salvage pathway transcriptional repressor PtsJ (430 aa).

The region spanning Gly4–Ser72 is the HTH gntR-type domain. The segment at residues Val32 to Lys51 is a DNA-binding region (H-T-H motif). Residues Lys70 to Pro95 are disordered. N6-(pyridoxal phosphate)lysine is present on Lys282.

The protein in the C-terminal section; belongs to the class-I pyridoxal-phosphate-dependent aminotransferase family. Homodimer in both apo- and holo-forms.

Functionally, acts as a transcriptional repressor of the pdxK gene, encoding a pyridoxal kinase involved in the vitamin B6 salvage pathway. Also represses transcription of its own gene. Binds to the ptsJ-pdxK intergenic region, but does not bind pdxY and pdxH promoters. Among all six B6 vitamers, only pyridoxal 5'-phosphate (PLP) clearly binds to the protein and acts as an effector molecule for PtsJ, inducing a protein conformational change that increases affinity for DNA. Thus, PLP stabilizes protein-DNA interactions, reinforcing repression. This chain is Vitamin B6 salvage pathway transcriptional repressor PtsJ, found in Salmonella typhimurium (strain LT2 / SGSC1412 / ATCC 700720).